A 353-amino-acid polypeptide reads, in one-letter code: Cyanuric acid amidohydrolase (353 aa).

The interval 1-90 (MSSTALYTVP…NIFVRDERQY (90 aa)) is RU A. Residues Arg-49 and 69-70 (SG) each bind substrate. Residues 96-231 (GLVTAVGRTR…CHILVVAESD (136 aa)) are RU B. Lys-145 is a catalytic residue. Substrate is bound by residues Arg-177 and 214–215 (SS). The active-site Nucleophile is Ser-214. The segment at 237 to 353 (LRAAHTAMRD…TANATGEASR (117 aa)) is RU C. Glu-275 lines the Mg(2+) pocket. Substrate-binding positions include Arg-302 and 321 to 322 (SG). Positions 324, 327, 328, 329, and 332 each coordinate Mg(2+).

The protein belongs to the cyclic amide hydrolase (CyAH) family. Homotetramer.

The catalysed reaction is cyanurate + H2O = 1-carboxybiuret + H(+). It functions in the pathway xenobiotic degradation; atrazine degradation; biuret from cyanurate: step 1/1. With respect to regulation, inhibited by barbituric acid. Functionally, responsible for the hydrolysis of cyanuric acid, an intermediate formed during catabolism of s-triazine based compounds in herbicides such as atrazine and polymers such as melamine. Catalyzes the hydrolytic opening of the s-triazine ring of cyanuric acid (2,4,6-trihydroxy-s-triazine) to yield carbon dioxide and carboxybiuret, which spontaneously decarboxylates to biuret. Required for growth on melamine or cyanuric acid as sole nitrogen source. In Rhodococcus sp, this protein is Cyanuric acid amidohydrolase.